We begin with the raw amino-acid sequence, 215 residues long: Intraflagellar transport protein 43 homolog B (215 aa).

Residues 1-107 (MDDHLKLGDS…SDGEGDIPVI (107 aa)) are disordered.

The protein belongs to the IFT43 family. As to quaternary structure, component of IFT complex A.

Its function is as follows. Component of IFT complex A (IFT-A) involved in retrograde ciliary transport along microtubules from the ciliary tip to the base. The polypeptide is Intraflagellar transport protein 43 homolog B (ift43b) (Salmo salar (Atlantic salmon)).